We begin with the raw amino-acid sequence, 802 residues long: Neuronal PAS domain-containing protein 4 (802 aa).

Residues 1–13 (MYRSTKGASKARR) are basic motif; degenerate. Residues 1 to 53 (MYRSTKGASKARRDQINAEIRNLKELLPLAEADKVRLSYLHIMSLACIYTRKG) enclose the bHLH domain. A coiled-coil region spans residues 5–38 (TKGASKARRDQINAEIRNLKELLPLAEADKVRLS). Residues 14–53 (DQINAEIRNLKELLPLAEADKVRLSYLHIMSLACIYTRKG) are helix-loop-helix motif. PAS domains are found at residues 70-144 (SAQE…LDAD) and 203-275 (PGPG…LAEN). In terms of domain architecture, PAC spans 280-319 (AEMVVRLQAKHGGWTWIYCMLYSDGPEGPITANNYPISDT). Polar residues-rich tracts occupy residues 472–495 (PSSA…SSAR), 502–518 (TPCT…STAT), and 527–555 (THEQ…QLSP). Residues 472–555 (PSSATFPDPL…SQTFPEQLSP (84 aa)) form a disordered region. Residues 624–648 (YTEKEQNEIDRLIQQISQLAQGMDR) are a coiled coil.

In terms of assembly, efficient DNA binding requires dimerization with another bHLH protein. Heterodimer; forms a heterodimer with ARNT, ARNT2 or BMAL1. Ubiquitinated, leading to degradation by the proteosome. As to expression, specifically expressed in neurons. Expressed in the lateral nucleus of the amygdala (at protein level).

The protein resides in the nucleus. In terms of biological role, transcription factor expressed in neurons of the brain that regulates the excitatory-inhibitory balance within neural circuits and is required for contextual memory in the hippocampus. Plays a key role in the structural and functional plasticity of neurons. Acts as an early-response transcription factor in both excitatory and inhibitory neurons, where it induces distinct but overlapping sets of late-response genes in these two types of neurons, allowing the synapses that form on inhibitory and excitatory neurons to be modified by neuronal activity in a manner specific to their function within a circuit, thereby facilitating appropriate circuit responses to sensory experience. In excitatory neurons, activates transcription of BDNF, which in turn controls the number of GABA-releasing synapses that form on excitatory neurons, thereby promoting an increased number of inhibitory synapses on excitatory neurons. In inhibitory neurons, regulates a distinct set of target genes that serve to increase excitatory input onto somatostatin neurons, probably resulting in enhanced feedback inhibition within cortical circuits. The excitatory and inhibitory balance in neurons affects a number of processes, such as short-term and long-term memory, acquisition of experience, fear memory, response to stress and social behavior. Acts as a regulator of dendritic spine development in olfactory bulb granule cells in a sensory-experience-dependent manner by regulating expression of MDM2. Efficient DNA binding requires dimerization with another bHLH protein, such as ARNT, ARNT2 or BMAL1. Can activate the CME (CNS midline enhancer) element. This chain is Neuronal PAS domain-containing protein 4, found in Rattus norvegicus (Rat).